Consider the following 1912-residue polypeptide: Methylcytosine dioxygenase TET2 (1912 aa).

The span at 1-11 shows a compositional bias: basic and acidic residues; the sequence is MEQDRTTHAEG. The segment at 1 to 86 is disordered; the sequence is MEQDRTTHAE…PHEDRGYSRC (86 aa). Phosphoserine occurs at positions 15 and 23. Residues 53 to 74 are compositionally biased toward polar residues; the sequence is TKWQSSQSCYGISHMKGSQSSH. 2 positions are modified to phosphoserine: Ser76 and Ser97. Disordered stretches follow at residues 112-166, 340-359, 367-388, 429-470, 673-723, 832-862, 907-966, and 1009-1052; these read LDQK…FPTR, DRNL…QKET, SSKF…QSLL, IDHQ…PEKS, PQTQ…DKQR, EQAQ…AEAA, QEQQ…NGQP, and ESEN…EGCN. Composition is skewed to polar residues over residues 135-158, 340-353, 367-387, 434-447, and 673-689; these read SRQP…QESS, DRNL…SEQY, SSKF…SQSL, KTSS…SVHT, and PQTQ…SNFP. Residues 690–701 show a composition bias toward low complexity; sequence QICQQQQQQQLQ. 2 stretches are compositionally biased toward polar residues: residues 707–719 and 832–844; these read QMPQ…QGSN and EQAQ…SSLQ. Residues 907–921 are compositionally biased toward low complexity; that stretch reads QEQQQTQQSQPGHNQ. 2 stretches are compositionally biased toward polar residues: residues 944–966 and 1036–1046; these read PQEN…NGQP and SDTPGEQSQNG. Residue Ser1036 is modified to Phosphoserine. Cys1048, Cys1106, His1132, and Cys1134 together coordinate Zn(2+). A 2-oxoglutarate-binding site is contributed by Arg1174. Positions 1184, 1186, 1202, and 1211 each coordinate Zn(2+). Positions 1203 to 1216 are interaction with DNA; sequence SWSMYYNGCKFARS. Lys1212 participates in a covalent cross-link: Glycyl lysine isopeptide (Lys-Gly) (interchain with G-Cter in ubiquitin). Cys1271 lines the Zn(2+) pocket. Residue Cys1287 coordinates 2-oxoglutarate. His1293 is a binding site for Zn(2+). Fe cation is bound by residues His1295 and Asp1297. Asn1300 lines the substrate pocket. His1329 contributes to the 2-oxoglutarate binding site. Disordered regions lie at residues 1379-1414 and 1444-1514; these read KKKA…SSSH and LQRH…HTSD. Basic residues predominate over residues 1387-1396; the sequence is AKTKKAARKR. Over residues 1456-1473 the composition is skewed to pro residues; sequence QPQPPQPQPQTTPQPQPQ. Polar residues predominate over residues 1480–1512; the sequence is GNSQSVGSHCSGSTSVYTRQPTPHSPYPSSAHT. A Fe cation-binding site is contributed by His1795. Residue 1810 to 1812 participates in 2-oxoglutarate binding; sequence RIS. Substrate is bound at residue 1816 to 1818; it reads YRH. Zn(2+) is bound at residue His1826. A compositionally biased stretch (basic and acidic residues) spans 1842 to 1866; it reads EEECGKNGSDHVSQKNHGKQEKREP. The tract at residues 1842 to 1871 is disordered; sequence EEECGKNGSDHVSQKNHGKQEKREPTGPQE.

The protein belongs to the TET family. Interacts with HCFC1. Interacts with OGT. Interacts with PROSER1; this interaction mediates TET2 O-GlcNAcylation and stability by promoting the interaction between OGT and TET2. Directly interacts (via C-terminus) with the DCAF1 component of the CRL4(VprBP) E3 ubiquitin-protein ligase complex. Fe(2+) serves as cofactor. Requires Zn(2+) as cofactor. Post-translationally, may be glycosylated. It is unclear whether interaction with OGT leads to GlcNAcylation. According to a report, it is GlcNAcylated by OGT. In contrast, another group reports no GlcNAcylation by OGT in human ortholog. In terms of processing, monoubiquitinated at Lys-1212 by the DCX (DDB1-CUL4-X-box) E3 ubiquitin-protein ligase complex called CRL4(VprBP) or CUL4A-RBX1-DDB1-DCAF1/VPRBP complex; this modification promotes binding to DNA. Acetylated. As to expression, expressed in the brain, kidney, heart, lung, muscle and stomach. Expressed in germinal vesicle (GV) stage and MII-stage oocytes and in early embryos. Present in embryonic stem cells (ES cells).

The protein localises to the nucleus. It is found in the chromosome. The catalysed reaction is a 5-methyl-2'-deoxycytidine in DNA + 2-oxoglutarate + O2 = a 5-hydroxymethyl-2'-deoxycytidine in DNA + succinate + CO2. It carries out the reaction a 5-hydroxymethyl-2'-deoxycytidine in DNA + 2-oxoglutarate + O2 = a 5-formyl-2'-deoxycytidine in DNA + succinate + CO2 + H2O. It catalyses the reaction a 5-formyl-2'-deoxycytidine in DNA + 2-oxoglutarate + O2 = a 5-carboxyl-2'-deoxycytidine in DNA + succinate + CO2 + H(+). In terms of biological role, dioxygenase that catalyzes the conversion of the modified genomic base 5-methylcytosine (5mC) into 5-hydroxymethylcytosine (5hmC) and plays a key role in active DNA demethylation. Has a preference for 5-hydroxymethylcytosine in CpG motifs. Also mediates subsequent conversion of 5hmC into 5-formylcytosine (5fC), and conversion of 5fC to 5-carboxylcytosine (5caC). Conversion of 5mC into 5hmC, 5fC and 5caC probably constitutes the first step in cytosine demethylation. Methylation at the C5 position of cytosine bases is an epigenetic modification of the mammalian genome which plays an important role in transcriptional regulation. In addition to its role in DNA demethylation, also involved in the recruitment of the O-GlcNAc transferase OGT to CpG-rich transcription start sites of active genes, thereby promoting histone H2B GlcNAcylation by OGT. The chain is Methylcytosine dioxygenase TET2 (Tet2) from Mus musculus (Mouse).